A 188-amino-acid chain; its full sequence is Peptidyl-tRNA hydrolase (188 aa).

Tyr-14 serves as a coordination point for tRNA. The active-site Proton acceptor is His-19. TRNA contacts are provided by Tyr-64, Asn-66, and Asn-112.

Belongs to the PTH family. In terms of assembly, monomer.

The protein resides in the cytoplasm. The enzyme catalyses an N-acyl-L-alpha-aminoacyl-tRNA + H2O = an N-acyl-L-amino acid + a tRNA + H(+). Hydrolyzes ribosome-free peptidyl-tRNAs (with 1 or more amino acids incorporated), which drop off the ribosome during protein synthesis, or as a result of ribosome stalling. Its function is as follows. Catalyzes the release of premature peptidyl moieties from peptidyl-tRNA molecules trapped in stalled 50S ribosomal subunits, and thus maintains levels of free tRNAs and 50S ribosomes. The protein is Peptidyl-tRNA hydrolase of Leuconostoc mesenteroides subsp. mesenteroides (strain ATCC 8293 / DSM 20343 / BCRC 11652 / CCM 1803 / JCM 6124 / NCDO 523 / NBRC 100496 / NCIMB 8023 / NCTC 12954 / NRRL B-1118 / 37Y).